The primary structure comprises 221 residues: Carbonic anhydrase (221 aa).

Positions 38, 40, 99, and 102 each coordinate Zn(2+).

Belongs to the beta-class carbonic anhydrase family. The cofactor is Zn(2+).

The enzyme catalyses hydrogencarbonate + H(+) = CO2 + H2O. The chain is Carbonic anhydrase (cynT) from Helicobacter pylori (strain J99 / ATCC 700824) (Campylobacter pylori J99).